The sequence spans 146 residues: Calmodulin-like protein 5 (146 aa).

Residue alanine 2 is modified to N-acetylalanine. 4 EF-hand domains span residues 8–43, 44–74, 78–113, and 114–146; these read EEEAQYKKAFSAVDTDGNGTINAQELGAALKATGKN, LSEAQLRKLISEVDSDGDGEISFQEFLTAAK, AGLEDLQVAFRAFDQDGDGHITVDELRRAMAGLGQP, and LPQEELDAMIREADVDQDGRVNYEEFARMLAQE. Residues aspartate 21, aspartate 23, asparagine 25, threonine 27, glutamate 32, aspartate 57, aspartate 59, aspartate 61, glutamate 63, glutamate 68, aspartate 91, aspartate 93, aspartate 95, histidine 97, glutamate 102, aspartate 127, aspartate 129, aspartate 131, arginine 133, and glutamate 138 each coordinate Ca(2+).

Associates with transglutaminase 3. Particularly abundant in the epidermis where its expression is directly related to keratinocyte differentiation. Very low expression in lung.

Binds calcium. May be involved in terminal differentiation of keratinocytes. The sequence is that of Calmodulin-like protein 5 (CALML5) from Homo sapiens (Human).